A 506-amino-acid polypeptide reads, in one-letter code: Cobyric acid synthase (506 aa).

A GATase cobBQ-type domain is found at 251 to 448; it reads DITIAIVQLP…LHGLFDSDAF (198 aa). Catalysis depends on C332, which acts as the Nucleophile. Residue H440 is part of the active site.

Belongs to the CobB/CobQ family. CobQ subfamily. In terms of assembly, homodimer.

The protein operates within cofactor biosynthesis; adenosylcobalamin biosynthesis. Its function is as follows. Catalyzes amidations at positions B, D, E, and G on adenosylcobyrinic A,C-diamide. NH(2) groups are provided by glutamine, and one molecule of ATP is hydrogenolyzed for each amidation. The protein is Cobyric acid synthase (cbiP) of Salmonella typhimurium (strain LT2 / SGSC1412 / ATCC 700720).